Consider the following 346-residue polypeptide: Beta-ketoacyl-[acyl-carrier-protein] synthase III (346 aa).

Residues Cys120 and His256 contribute to the active site. The interval 257 to 261 is ACP-binding; the sequence is QANIR. Residue Asn286 is part of the active site.

This sequence belongs to the thiolase-like superfamily. FabH family. Homodimer.

The protein resides in the cytoplasm. It catalyses the reaction malonyl-[ACP] + acetyl-CoA + H(+) = 3-oxobutanoyl-[ACP] + CO2 + CoA. It participates in lipid metabolism; fatty acid biosynthesis. Catalyzes the condensation reaction of fatty acid synthesis by the addition to an acyl acceptor of two carbons from malonyl-ACP. Catalyzes the first condensation reaction which initiates fatty acid synthesis and may therefore play a role in governing the total rate of fatty acid production. Possesses both acetoacetyl-ACP synthase and acetyl transacylase activities. Its substrate specificity determines the biosynthesis of branched-chain and/or straight-chain of fatty acids. The chain is Beta-ketoacyl-[acyl-carrier-protein] synthase III from Deinococcus geothermalis (strain DSM 11300 / CIP 105573 / AG-3a).